Reading from the N-terminus, the 63-residue chain is Large ribosomal subunit protein uL30 (63 aa).

The protein belongs to the universal ribosomal protein uL30 family. As to quaternary structure, part of the 50S ribosomal subunit.

The sequence is that of Large ribosomal subunit protein uL30 from Bradyrhizobium sp. (strain ORS 278).